The primary structure comprises 223 residues: Probable transaldolase (223 aa).

The active-site Schiff-base intermediate with substrate is Lys86.

It belongs to the transaldolase family. Type 3B subfamily.

Its subcellular location is the cytoplasm. The catalysed reaction is D-sedoheptulose 7-phosphate + D-glyceraldehyde 3-phosphate = D-erythrose 4-phosphate + beta-D-fructose 6-phosphate. The protein operates within carbohydrate degradation; pentose phosphate pathway; D-glyceraldehyde 3-phosphate and beta-D-fructose 6-phosphate from D-ribose 5-phosphate and D-xylulose 5-phosphate (non-oxidative stage): step 2/3. Its function is as follows. Transaldolase is important for the balance of metabolites in the pentose-phosphate pathway. The protein is Probable transaldolase (tal) of Thermoplasma acidophilum (strain ATCC 25905 / DSM 1728 / JCM 9062 / NBRC 15155 / AMRC-C165).